The primary structure comprises 412 residues: Cellobiose 2-epimerase (412 aa).

It belongs to the cellobiose 2-epimerase family.

It catalyses the reaction D-cellobiose = beta-D-glucosyl-(1-&gt;4)-D-mannopyranose. Functionally, catalyzes the reversible epimerization of cellobiose to 4-O-beta-D-glucopyranosyl-D-mannose (Glc-Man). Can also use lactose, epilactose, mannobiose and cellotriose. Highly specific for oligosaccharides linked by the beta-1,4-glycosidic linkage. Shows preference for lactose. This is Cellobiose 2-epimerase (ce) from Rhodothermus marinus (Rhodothermus obamensis).